Here is a 76-residue protein sequence, read N- to C-terminus: MSWYEKYNIVLNPPKRCSFACADNLTTILAEDGNNIRAILYSQPKKLKILQDFLATSRNKMFLYKILDDEIRRVLT.

Residues Cys17 and Cys21 are joined by a disulfide bond.

It belongs to the orthopoxvirus OPG128 family. As to quaternary structure, interacts with sulfhydryl oxidase OPG072; this interaction involves formation of a transient disulfide-bonded intermediate, allowing disulfide bond transfer. Interacts with OPG088; this interaction involves formation of a transient disulfide-bonded intermediate, allowing disulfide bond transfer.

Functionally, late protein which probably participates in disulfide bond formation by functioning as a thiol-disulfide transfer protein between membrane-associated OPG072 and OPG08. The complete pathway for formation of disulfide bonds in intracellular virion membrane proteins sequentially involves oxidation of OPG072, OPG128 and OPG08. This is Protein OPG128 (OPG128) from Bos taurus (Bovine).